Here is a 355-residue protein sequence, read N- to C-terminus: Small ribosomal subunit protein uS2 (355 aa).

The protein belongs to the universal ribosomal protein uS2 family.

In Methylobacterium radiotolerans (strain ATCC 27329 / DSM 1819 / JCM 2831 / NBRC 15690 / NCIMB 10815 / 0-1), this protein is Small ribosomal subunit protein uS2.